A 92-amino-acid polypeptide reads, in one-letter code: Small ribosomal subunit protein uS19 (92 aa).

This sequence belongs to the universal ribosomal protein uS19 family.

Its function is as follows. Protein S19 forms a complex with S13 that binds strongly to the 16S ribosomal RNA. In Crocosphaera subtropica (strain ATCC 51142 / BH68) (Cyanothece sp. (strain ATCC 51142)), this protein is Small ribosomal subunit protein uS19.